Consider the following 510-residue polypeptide: Protein HGV2 (510 aa).

A disordered region spans residues 95 to 227 (GVPEEDADGD…KENESEEDPD (133 aa)). Positions 98 to 110 (EEDADGDSDQEQE) are enriched in acidic residues. Composition is skewed to basic and acidic residues over residues 111–129 (QFEK…REEV) and 142–199 (EERG…DKPV). The span at 204 to 217 (TEEPGTSGTSASSS) shows a compositional bias: low complexity. 2 TPR repeats span residues 260 to 293 (AQCH…QKDL) and 302 to 335 (AETY…LEAR). The tract at residues 391 to 510 (DGSPFRQASE…TPKKDAAKRR (120 aa)) is disordered. A compositionally biased stretch (low complexity) spans 398–411 (ASEGESSSGLGAST). Short sequence motifs (nuclear localization signal) lie at residues 444–451 (VRRKRPSP) and 465–471 (SKKAKQE). Basic and acidic residues predominate over residues 459 to 471 (ESKENESKKAKQE).

It belongs to the NASP family. In terms of tissue distribution, embryo and larvae.

The protein resides in the nucleus. In terms of biological role, may function as a nucleosome assembly factor during rapid embryonic cell divisions. This chain is Protein HGV2 (HGV2), found in Halocynthia roretzi (Sea squirt).